The primary structure comprises 114 residues: Fructose-bisphosphate aldolase 2 (114 aa).

Position 35–38 (35–38 (NIDT)) interacts with dihydroxyacetone phosphate.

Belongs to the class II fructose-bisphosphate aldolase family. As to quaternary structure, homodimer. Requires Zn(2+) as cofactor.

It catalyses the reaction beta-D-fructose 1,6-bisphosphate = D-glyceraldehyde 3-phosphate + dihydroxyacetone phosphate. The protein operates within carbohydrate biosynthesis; Calvin cycle. It functions in the pathway carbohydrate degradation; glycolysis; D-glyceraldehyde 3-phosphate and glycerone phosphate from D-glucose: step 4/4. Functionally, catalyzes the aldol condensation of dihydroxyacetone phosphate (DHAP or glycerone-phosphate) with glyceraldehyde 3-phosphate (G3P) to form fructose 1,6-bisphosphate (FBP) in gluconeogenesis and the reverse reaction in glycolysis. This is Fructose-bisphosphate aldolase 2 (cbbA) from Rhodobacter capsulatus (Rhodopseudomonas capsulata).